Reading from the N-terminus, the 464-residue chain is MKRKKTVLQQILSEKRKKVKEGDSMSGKDEFGTTKYVIYAEFEANGVVERPDVVGAIFGQTEGLLGDDLDLRELQKTGRIGRIRVEVHNKAGKTYGTITVPSSLDRVETAVLAAALETIDRVGPAEARIKVLRIEDVRATKRKYIIERAKEILETLMEQEIPETQEITEEVKKAVRAKELIEYGPEKLPAGPHVPFSDSIIVVEGRADVLNLLKHGIKNAIAVEGTSIPETIIKLSKERIVTAFTDGDRGGELILKELLQVADVDYVARAPEGKEVEELTKKEIVKALRSKVPAEQVINEMFNKGRSFYELIRERESEGERQPRQVTKPEPEVVKAQPKAETPEEKREPATVVRPSAEKIVKPIETSKSAPELEEFREFIERVKKDGIALLLDENKNVIAEIPVRELTNQLKERKDVYAVVFNGVITQRLIDTVSESGVKYIVGARKYNVVRRPVSLKIITFAE.

Residues 198–272 (DSIIVVEGRA…DVDYVARAPE (75 aa)) enclose the Toprim domain. The Mg(2+) site is built by Glu204, Asp246, and Asp248. The segment covering 315 to 333 (RESEGERQPRQVTKPEPEV) has biased composition (basic and acidic residues). The tract at residues 315-351 (RESEGERQPRQVTKPEPEVVKAQPKAETPEEKREPAT) is disordered.

It belongs to the archaeal DnaG primase family. Forms a ternary complex with MCM helicase and DNA. Component of the archaeal exosome complex. The cofactor is Mg(2+).

The catalysed reaction is ssDNA + n NTP = ssDNA/pppN(pN)n-1 hybrid + (n-1) diphosphate.. Functionally, RNA polymerase that catalyzes the synthesis of short RNA molecules used as primers for DNA polymerase during DNA replication. Also part of the exosome, which is a complex involved in RNA degradation. Acts as a poly(A)-binding protein that enhances the interaction between heteromeric, adenine-rich transcripts and the exosome. The polypeptide is DNA primase DnaG (Thermococcus kodakarensis (strain ATCC BAA-918 / JCM 12380 / KOD1) (Pyrococcus kodakaraensis (strain KOD1))).